Reading from the N-terminus, the 420-residue chain is ATP phosphoribosyltransferase regulatory subunit (420 aa).

Belongs to the class-II aminoacyl-tRNA synthetase family. HisZ subfamily. Heteromultimer composed of HisG and HisZ subunits.

The protein localises to the cytoplasm. It functions in the pathway amino-acid biosynthesis; L-histidine biosynthesis; L-histidine from 5-phospho-alpha-D-ribose 1-diphosphate: step 1/9. Functionally, required for the first step of histidine biosynthesis. May allow the feedback regulation of ATP phosphoribosyltransferase activity by histidine. The polypeptide is ATP phosphoribosyltransferase regulatory subunit (Bacillus cereus (strain AH820)).